The sequence spans 208 residues: Ras-related protein Rab-6A (208 aa).

At S2 the chain carries N-acetylserine. Residues S23, V24, G25, K26, T27, S28, D39, N40, Y42, and T45 each coordinate GTP. Position 27 (T27) interacts with Mg(2+). The Switch 1 motif lies at 32-50 (RFMYDSFDNTYQATIGIDF). The Mg(2+) site is built by T45 and D68. A Switch 2 motif is present at residues 69 to 88 (TAGQERFRSLIPSYIRDSTV). GTP is bound at residue G71. Position 82 is an O-AMP-tyrosine; by Legionella DrrA (Y82). GTP contacts are provided by N126, K127, D129, S156, A157, and K158. The residue at position 184 (S184) is a Phosphoserine. 2 S-geranylgeranyl cysteine lipidation sites follow: C206 and C208. C208 bears the Cysteine methyl ester mark.

It belongs to the small GTPase superfamily. Rab family. Interacts (GTP-bound) with DYNLRB1; the interaction is direct. Interacts with BICD1. Interacts with BICD2; the interaction is direct. Interacts (GTP-bound) with VPS13B. In terms of assembly, interacts with BICD1. Interacts (GDP-bound) with DYNLRB1; the interaction is direct. Interacts (GTP-bound) with VPS13B. As to quaternary structure, interacts with BICDL1; leads to its accumulation in the pericentrosomal region. Interacts with SCYL1BP1. Interacts with VSP52. Interacts with RABGAP1. Interacts with GCC2 (via its GRIP domain). Interacts with RAB6IP1 (via its RUN 1 domain). Interacts with TMF1. Interacts with CIMAP3. Interacts (GTP-bound) with APBA1/MINT1 isoform 2, also called Mint1_826, but not with isoform 1. Interacts with RIC1; the interaction is direct with a preference for RAB6A-GDP. Interacts with RGP1; the interaction is direct with a preference for RAB6A-GDP. (Microbial infection) Interacts with human cytomegalovirus protein UL32. Mg(2+) is required as a cofactor. Prenylated. Ubiquitous.

The protein localises to the golgi apparatus membrane. Its subcellular location is the cytoplasmic vesicle. The protein resides in the secretory vesicle. It localises to the acrosome membrane. The enzyme catalyses GTP + H2O = GDP + phosphate + H(+). Regulated by guanine nucleotide exchange factors (GEFs) which promote the exchange of bound GDP for free GTP. Regulated by GTPase activating proteins (GAPs) which increase the GTP hydrolysis activity. Inhibited by GDP dissociation inhibitors (GDIs). The small GTPases Rab are key regulators of intracellular membrane trafficking, from the formation of transport vesicles to their fusion with membranes. Rabs cycle between an inactive GDP-bound form and an active GTP-bound form that is able to recruit to membranes different sets of downstream effectors directly responsible for vesicle formation, movement, tethering and fusion. RAB6A acts as a regulator of COPI-independent retrograde transport from the Golgi apparatus towards the endoplasmic reticulum (ER). Has a low GTPase activity. Recruits VPS13B to the Golgi membrane. Plays a role in neuron projection development. The sequence is that of Ras-related protein Rab-6A from Homo sapiens (Human).